The chain runs to 227 residues: Homeobox-leucine zipper protein ATHB-54 (227 aa).

A DNA-binding region (homeobox) is located at residues 65–124 (EITKKRKLTPIQLRLLEESFEEEKRLEPDRKLWLAEKLGLQPSQVAVWFQNRRARYKTKQ). The leucine-zipper stretch occupies residues 125–153 (LEHDCDSLKASYAKLKTDWDILFVQNQTL). The interval 175–198 (IERKRLGEEGSSVKSDNTQYSEEE) is disordered.

This sequence belongs to the HD-ZIP homeobox family. Class I subfamily. Predominantly expressed in flowers and siliques.

It is found in the nucleus. Probable transcription factor. The sequence is that of Homeobox-leucine zipper protein ATHB-54 (ATHB-54) from Arabidopsis thaliana (Mouse-ear cress).